A 683-amino-acid chain; its full sequence is Acetyl-coenzyme A synthetase 2 (683 aa).

CoA is bound by residues 207 to 210 (RGGK) and Thr-326. Residues 402–404 (GEP), 426–431 (DTFWQT), Asp-517, and Arg-532 contribute to the ATP site. Ser-540 provides a ligand contact to CoA. Residue Arg-543 participates in ATP binding. Position 613 (Arg-613) interacts with CoA.

Belongs to the ATP-dependent AMP-binding enzyme family.

The catalysed reaction is acetate + ATP + CoA = acetyl-CoA + AMP + diphosphate. This chain is Acetyl-coenzyme A synthetase 2 (ACS2), found in Candida glabrata (strain ATCC 2001 / BCRC 20586 / JCM 3761 / NBRC 0622 / NRRL Y-65 / CBS 138) (Yeast).